Here is a 399-residue protein sequence, read N- to C-terminus: Protochlorophyllide reductase, chloroplastic (399 aa).

The N-terminal 64 residues, 1–64, are a transit peptide targeting the chloroplast; it reads MALQTASMLP…RQKVGAVRAE (64 aa).

It belongs to the short-chain dehydrogenases/reductases (SDR) family. POR subfamily.

It is found in the plastid. The protein localises to the chloroplast. The catalysed reaction is chlorophyllide a + NADP(+) = protochlorophyllide a + NADPH + H(+). It participates in porphyrin-containing compound metabolism; chlorophyll biosynthesis. In terms of biological role, phototransformation of protochlorophyllide (Pchlide) to chlorophyllide (Chlide). In Pisum sativum (Garden pea), this protein is Protochlorophyllide reductase, chloroplastic (3PCR).